Here is a 515-residue protein sequence, read N- to C-terminus: Serine/threonine-protein kinase STE7 (515 aa).

The region spanning 191–466 is the Protein kinase domain; the sequence is LVQLGKIGAG…IHELLHHDLI (276 aa). Residues 197–205 and Lys-220 contribute to the ATP site; that span reads IGAGNSGTV. The Proton acceptor role is filled by Asp-331. Ser-359 is subject to Phosphoserine. Thr-363 is modified (phosphothreonine).

This sequence belongs to the protein kinase superfamily. STE Ser/Thr protein kinase family. MAP kinase kinase subfamily.

The enzyme catalyses L-seryl-[protein] + ATP = O-phospho-L-seryl-[protein] + ADP + H(+). It carries out the reaction L-threonyl-[protein] + ATP = O-phospho-L-threonyl-[protein] + ADP + H(+). The catalysed reaction is L-tyrosyl-[protein] + ATP = O-phospho-L-tyrosyl-[protein] + ADP + H(+). Phosphorylated at multiple sites in response to pheromone. Serine/threonine protein kinase required for cell-type-specific transcription and signal transduction in yeast. It is thought that it is phosphorylated by the ste11 protein kinase and that it can phosphorylate the FUS3 and or KSS1 kinases. This chain is Serine/threonine-protein kinase STE7 (STE7), found in Saccharomyces cerevisiae (strain ATCC 204508 / S288c) (Baker's yeast).